A 207-amino-acid chain; its full sequence is MSGRPKLVLASGSPRRLSLLNQAGIEPDALRPVDIDETPTKGELPRACANRLARAKADAALRALQIDDELRGSFILAADTVVAVGRRILPKADLVDEASQCLRLLSGRNHRVYTAVCLVTPKENFRQRLVETRVRFKRLSEEDIQAYIGSGEWRGKAGGYAIQGIAGSFVVKLVGSYTNVVGLPLNESIALLGGEEFPIRAGWLDAG.

Asp-79 acts as the Proton acceptor in catalysis.

It belongs to the Maf family. YhdE subfamily. It depends on a divalent metal cation as a cofactor.

The protein resides in the cytoplasm. The enzyme catalyses dTTP + H2O = dTMP + diphosphate + H(+). It catalyses the reaction UTP + H2O = UMP + diphosphate + H(+). In terms of biological role, nucleoside triphosphate pyrophosphatase that hydrolyzes dTTP and UTP. May have a dual role in cell division arrest and in preventing the incorporation of modified nucleotides into cellular nucleic acids. The polypeptide is dTTP/UTP pyrophosphatase (Nitrobacter winogradskyi (strain ATCC 25391 / DSM 10237 / CIP 104748 / NCIMB 11846 / Nb-255)).